The sequence spans 303 residues: Sodium/potassium-transporting ATPase subunit beta-1 (303 aa).

Over 1–34 (MPAATKDSDGGWKKFLWNSEKKEFLGRTGGSWAK) the chain is Cytoplasmic. A helical; Signal-anchor for type II membrane protein membrane pass occupies residues 35–55 (ILLFYVIFYGCLAGIFIGTIQ). The Extracellular portion of the chain corresponds to 56–303 (ALLLTINDFK…FDVKFTINES (248 aa)). A glycan (N-linked (GlcNAc...) asparagine) is linked at Asn-113. 2 disulfide bridges follow: Cys-126–Cys-149 and Cys-159–Cys-175. 2 N-linked (GlcNAc...) asparagine glycosylation sites follow: Asn-194 and Asn-264. Cysteines 214 and 275 form a disulfide.

This sequence belongs to the X(+)/potassium ATPases subunit beta family. The sodium/potassium-transporting ATPase is composed of a catalytic alpha subunit, an auxiliary non-catalytic beta subunit and an additional regulatory subunit. In terms of tissue distribution, detected in all tissues except liver and cardiac muscle. Highest levels found in intestine, ovary and kidney with marginally lower levels in brain, spleen, esophagus, eye and pancreas, intermediate levels in gill and low levels in white and red skeletal muscle.

The protein resides in the cell membrane. Functionally, this is the non-catalytic component of the active enzyme, which catalyzes the hydrolysis of ATP coupled with the exchange of Na(+) and K(+) ions across the plasma membrane. The beta subunit regulates, through assembly of alpha/beta heterodimers, the number of sodium pumps transported to the plasma membrane. The sequence is that of Sodium/potassium-transporting ATPase subunit beta-1 (atp1b1) from Anguilla anguilla (European freshwater eel).